The primary structure comprises 290 residues: ATP synthase gamma chain (290 aa).

The protein belongs to the ATPase gamma chain family. As to quaternary structure, F-type ATPases have 2 components, CF(1) - the catalytic core - and CF(0) - the membrane proton channel. CF(1) has five subunits: alpha(3), beta(3), gamma(1), delta(1), epsilon(1). CF(0) has three main subunits: a, b and c.

Its subcellular location is the cell membrane. Its function is as follows. Produces ATP from ADP in the presence of a proton gradient across the membrane. The gamma chain is believed to be important in regulating ATPase activity and the flow of protons through the CF(0) complex. The polypeptide is ATP synthase gamma chain (Chloroflexus aurantiacus (strain ATCC 29366 / DSM 635 / J-10-fl)).